A 550-amino-acid chain; its full sequence is Chaperonin GroEL (550 aa).

Residues 30 to 33 (TLGP), K51, 87 to 91 (DGTTT), G415, and D497 contribute to the ATP site.

Belongs to the chaperonin (HSP60) family. As to quaternary structure, forms a cylinder of 14 subunits composed of two heptameric rings stacked back-to-back. Interacts with the co-chaperonin GroES.

It is found in the cytoplasm. It carries out the reaction ATP + H2O + a folded polypeptide = ADP + phosphate + an unfolded polypeptide.. Together with its co-chaperonin GroES, plays an essential role in assisting protein folding. The GroEL-GroES system forms a nano-cage that allows encapsulation of the non-native substrate proteins and provides a physical environment optimized to promote and accelerate protein folding. The sequence is that of Chaperonin GroEL from Yersinia enterocolitica serotype O:8 / biotype 1B (strain NCTC 13174 / 8081).